The following is a 525-amino-acid chain: GMP synthase [glutamine-hydrolyzing] (525 aa).

A Glutamine amidotransferase type-1 domain is found at 8–206; that stretch reads PLLILDFGSQ…VVDICKASTD (199 aa). Residue cysteine 85 is the Nucleophile of the active site. Residues histidine 180 and glutamate 182 contribute to the active site. Residues 207 to 400 enclose the GMPS ATP-PPase domain; it reads WTPEHIIDEA…LGLPHDMVYR (194 aa). ATP is bound at residue 234–240; sequence SGGVDSS.

In terms of assembly, homodimer.

It carries out the reaction XMP + L-glutamine + ATP + H2O = GMP + L-glutamate + AMP + diphosphate + 2 H(+). It participates in purine metabolism; GMP biosynthesis; GMP from XMP (L-Gln route): step 1/1. Its function is as follows. Catalyzes the synthesis of GMP from XMP. This Legionella pneumophila (strain Paris) protein is GMP synthase [glutamine-hydrolyzing].